The chain runs to 1123 residues: Leucine--tRNA ligase, cytoplasmic (1123 aa).

Residues 84–94 carry the 'HIGH' region motif; it reads PYMNGRLHAGH. The 'KMSKS' region motif lies at 757-761; sequence KMSKS. ATP is bound at residue K760.

Belongs to the class-I aminoacyl-tRNA synthetase family.

It is found in the cytoplasm. The catalysed reaction is tRNA(Leu) + L-leucine + ATP = L-leucyl-tRNA(Leu) + AMP + diphosphate. The sequence is that of Leucine--tRNA ligase, cytoplasmic (leu-6) from Neurospora crassa (strain ATCC 24698 / 74-OR23-1A / CBS 708.71 / DSM 1257 / FGSC 987).